The following is an 81-amino-acid chain: Photosystem I iron-sulfur center (81 aa).

4Fe-4S ferredoxin-type domains lie at Ser-2–Trp-31 and Ile-39–Tyr-68. Positions 11, 14, 17, 21, 48, 51, 54, and 58 each coordinate [4Fe-4S] cluster.

In terms of assembly, the eukaryotic PSI reaction center is composed of at least 11 subunits. The cofactor is [4Fe-4S] cluster.

It is found in the plastid. Its subcellular location is the chloroplast thylakoid membrane. The catalysed reaction is reduced [plastocyanin] + hnu + oxidized [2Fe-2S]-[ferredoxin] = oxidized [plastocyanin] + reduced [2Fe-2S]-[ferredoxin]. Its function is as follows. Apoprotein for the two 4Fe-4S centers FA and FB of photosystem I (PSI); essential for photochemical activity. FB is the terminal electron acceptor of PSI, donating electrons to ferredoxin. The C-terminus interacts with PsaA/B/D and helps assemble the protein into the PSI complex. Required for binding of PsaD and PsaE to PSI. PSI is a plastocyanin/cytochrome c6-ferredoxin oxidoreductase, converting photonic excitation into a charge separation, which transfers an electron from the donor P700 chlorophyll pair to the spectroscopically characterized acceptors A0, A1, FX, FA and FB in turn. This is Photosystem I iron-sulfur center from Chlorella vulgaris (Green alga).